A 111-amino-acid polypeptide reads, in one-letter code: Nucleoid-associated protein PSEEN1789 (111 aa).

Disordered regions lie at residues 1 to 25 (MMKG…KMQE) and 89 to 111 (NSQD…KMPF).

Belongs to the YbaB/EbfC family. In terms of assembly, homodimer.

It is found in the cytoplasm. The protein localises to the nucleoid. In terms of biological role, binds to DNA and alters its conformation. May be involved in regulation of gene expression, nucleoid organization and DNA protection. The sequence is that of Nucleoid-associated protein PSEEN1789 from Pseudomonas entomophila (strain L48).